The following is a 49-amino-acid chain: Large ribosomal subunit protein bL33 (49 aa).

This sequence belongs to the bacterial ribosomal protein bL33 family.

This is Large ribosomal subunit protein bL33 from Clostridium botulinum (strain Alaska E43 / Type E3).